Reading from the N-terminus, the 184-residue chain is Ribosome-recycling factor (184 aa).

It belongs to the RRF family.

The protein localises to the cytoplasm. Its function is as follows. Responsible for the release of ribosomes from messenger RNA at the termination of protein biosynthesis. May increase the efficiency of translation by recycling ribosomes from one round of translation to another. This chain is Ribosome-recycling factor, found in Oleidesulfovibrio alaskensis (strain ATCC BAA-1058 / DSM 17464 / G20) (Desulfovibrio alaskensis).